The chain runs to 734 residues: Regulator of G-protein signaling rgs-6 (734 aa).

The disordered stretch occupies residues 1 to 24 (MSTPCSGNEPATPTNTSPNNETSN). Residues 8–24 (NEPATPTNTSPNNETSN) show a composition bias toward low complexity. The region spanning 46-157 (IFKKVIRDPV…YDCWPRFLRS (112 aa)) is the RGS domain. 3 disordered regions span residues 162 to 236 (QPSF…SPTH), 489 to 515 (HAVS…YSPA), and 538 to 734 (VNAG…AAYV). The segment covering 166-176 (TDEELAADDED) has biased composition (acidic residues). Positions 180–191 (HSQPTSLNNTNE) are enriched in polar residues. A compositionally biased stretch (low complexity) spans 194–208 (AAAQQSQPAPNAPAA). 2 stretches are compositionally biased toward polar residues: residues 494–506 (SDPN…SQDR) and 538–557 (VNAG…SKNR). Basic and acidic residues-rich tracts occupy residues 563-585 (SKTE…RSDD) and 606-619 (TTEE…KSGD). The segment covering 642–694 (AAAAAAGASPSTSAPSTSTSVQTKTTTSPTKSPTSTTITTSGTTTSATSSVAT) has biased composition (low complexity). Composition is skewed to polar residues over residues 705–715 (SASTPATSSQL) and 724–734 (RESSWQTAAYV).

The protein is Regulator of G-protein signaling rgs-6 of Caenorhabditis elegans.